The following is a 294-amino-acid chain: Putative glucose-6-phosphate 1-epimerase (294 aa).

2 residues coordinate substrate: Arg74 and Arg99. His164 is a catalytic residue. Asp208 contributes to the substrate binding site. Glu267 is a catalytic residue.

The protein belongs to the glucose-6-phosphate 1-epimerase family. In terms of assembly, monomer in solution.

It carries out the reaction alpha-D-glucose 6-phosphate = beta-D-glucose 6-phosphate. In terms of biological role, probably functions as a hexose-6-phosphate 1-epimerase. The polypeptide is Putative glucose-6-phosphate 1-epimerase (Salmonella typhimurium (strain LT2 / SGSC1412 / ATCC 700720)).